The chain runs to 581 residues: Probable peptidoglycan D,D-transpeptidase PenA (581 aa).

A helical transmembrane segment spans residues 28–48; it reads ISFVLMAMAVLFACLIARGLY. The Acyl-ester intermediate role is filled by serine 310.

It belongs to the transpeptidase family. FtsI subfamily.

Its subcellular location is the cell inner membrane. It carries out the reaction Preferential cleavage: (Ac)2-L-Lys-D-Ala-|-D-Ala. Also transpeptidation of peptidyl-alanyl moieties that are N-acyl substituents of D-alanine.. It participates in cell wall biogenesis; peptidoglycan biosynthesis. Catalyzes cross-linking of the peptidoglycan cell wall at the division septum. In Neisseria gonorrhoeae, this protein is Probable peptidoglycan D,D-transpeptidase PenA.